The following is a 138-amino-acid chain: 10 kDa chaperonin 1, chloroplastic (138 aa).

A chloroplast-targeting transit peptide spans 1–61; sequence MASSFITVPK…VPQADRVLVR (61 aa). The cpn-10 domain stretch occupies residues 50–137; that stretch reads KVVPQADRVL…CKESDLLAIV (88 aa).

This sequence belongs to the GroES chaperonin family. As to expression, expressed at low levels in germinating seeds, seedlings, rosettes leaves, flowers and siliques.

It is found in the plastid. Its subcellular location is the chloroplast. In terms of biological role, functions as a co-chaperone for protein folding in chloroplasts. The polypeptide is 10 kDa chaperonin 1, chloroplastic (Arabidopsis thaliana (Mouse-ear cress)).